We begin with the raw amino-acid sequence, 61 residues long: Progonadoliberin-1 (61 aa).

Position 1 is a pyrrolidone carboxylic acid (Gln-1). At Gly-10 the chain carries Glycine amide.

It belongs to the GnRH family.

It localises to the secreted. Functionally, stimulates the secretion of gonadotropins; it stimulates the secretion of both luteinizing and follicle-stimulating hormones. This chain is Progonadoliberin-1 (GNRH1), found in Ovis aries (Sheep).